A 474-amino-acid polypeptide reads, in one-letter code: tRNA modification GTPase MnmE (474 aa).

3 residues coordinate (6S)-5-formyl-5,6,7,8-tetrahydrofolate: R28, E92, and R131. Residues 227-395 (GIPVAIVGTT…LKGELTQIME (169 aa)) enclose the TrmE-type G domain. A K(+)-binding site is contributed by N237. GTP is bound by residues 237–242 (NVGKST), 256–262 (SDIHGTT), 281–284 (DTAG), and 376–378 (SAR). Residue S241 participates in Mg(2+) binding. The K(+) site is built by S256, I258, and T261. Residue T262 coordinates Mg(2+). K474 contributes to the (6S)-5-formyl-5,6,7,8-tetrahydrofolate binding site.

It belongs to the TRAFAC class TrmE-Era-EngA-EngB-Septin-like GTPase superfamily. TrmE GTPase family. As to quaternary structure, homodimer. Heterotetramer of two MnmE and two MnmG subunits. The cofactor is K(+).

The protein localises to the cytoplasm. Functionally, exhibits a very high intrinsic GTPase hydrolysis rate. Involved in the addition of a carboxymethylaminomethyl (cmnm) group at the wobble position (U34) of certain tRNAs, forming tRNA-cmnm(5)s(2)U34. This Porphyromonas gingivalis (strain ATCC BAA-308 / W83) protein is tRNA modification GTPase MnmE.